A 440-amino-acid chain; its full sequence is 5-hydroxytryptamine receptor 6 (440 aa).

Topologically, residues 1 to 27 are extracellular; the sequence is MVPEPGPVNSSTPAWGPGPPPAPGGSG. Asn-9 carries an N-linked (GlcNAc...) asparagine glycan. Residues 28 to 52 form a helical membrane-spanning segment; sequence WVAAALCVVIVLTAAANSLLIALIC. The Cytoplasmic portion of the chain corresponds to 53 to 62; that stretch reads TQPALRNTSN. A helical transmembrane segment spans residues 63–88; that stretch reads FFLVSLFTSDLMVGLVVMPPAMLNAL. Residues 89–96 are Extracellular-facing; the sequence is YGRWVLAR. A helical transmembrane segment spans residues 97–122; it reads GLCLLWTAFDVMCCSASILNLCLISL. Cysteines 99 and 180 form a disulfide. Asp-106 is a binding site for serotonin. Residues 123–142 are Cytoplasmic-facing; it reads DRYLLILSPLRYKLRMTAPR. The chain crosses the membrane as a helical span at residues 143-167; that stretch reads ALALILGAWSLAALASFLPLLLGWH. At 168-185 the chain is on the extracellular side; it reads ELGKARTSAPGQCRLLAS. A helical membrane pass occupies residues 186–209; the sequence is LPYVLVASGVTFFLPSGAICFTYC. Residues 210–268 lie on the Cytoplasmic side of the membrane; the sequence is RILLAARKQAVQVASLTTGTATAGQALETLQVPRTPRPGMESADSRRLTTKHSRKALKA. The chain crosses the membrane as a helical span at residues 269–295; sequence SLTLGILLSMFFVTWLPFFVASIAQAV. At 296-301 the chain is on the extracellular side; sequence CDCISP. Residues 302–325 traverse the membrane as a helical segment; it reads GLFDVLTWLGYCNSTMNPIIYPLF. The Cytoplasmic segment spans residues 326–440; it reads MRDFKRALGR…RQHPLGSPMN (115 aa).

It belongs to the G-protein coupled receptor 1 family. As to quaternary structure, interacts with CDK5. Interacts with MTOR. Interacts with RPTOR and NF1.

Its subcellular location is the cell membrane. Functionally, G-protein coupled receptor for 5-hydroxytryptamine (serotonin), a biogenic hormone that functions as a neurotransmitter, a hormone and a mitogen. Also has a high affinity for tricyclic psychotropic drugs. Ligand binding causes a conformation change that triggers signaling via guanine nucleotide-binding proteins (G proteins) and modulates the activity of downstream effectors. HTR6 is coupled to G(s) G alpha proteins and mediates activation of adenylate cyclase activity. Controls pyramidal neurons migration during corticogenesis, through the regulation of CDK5 activity. Is an activator of mTOR signaling. The polypeptide is 5-hydroxytryptamine receptor 6 (Mus musculus (Mouse)).